Here is a 280-residue protein sequence, read N- to C-terminus: Pantothenate synthetase (280 aa).

ATP is bound at residue 31–38 (MGNLHAGH). The active-site Proton donor is histidine 38. Glutamine 62 contributes to the (R)-pantoate binding site. Beta-alanine is bound at residue glutamine 62. 150–153 (GKKD) contributes to the ATP binding site. Position 156 (glutamine 156) interacts with (R)-pantoate. Residues valine 179 and 187–190 (MSSR) contribute to the ATP site.

The protein belongs to the pantothenate synthetase family. In terms of assembly, homodimer.

It is found in the cytoplasm. The catalysed reaction is (R)-pantoate + beta-alanine + ATP = (R)-pantothenate + AMP + diphosphate + H(+). It participates in cofactor biosynthesis; (R)-pantothenate biosynthesis; (R)-pantothenate from (R)-pantoate and beta-alanine: step 1/1. In terms of biological role, catalyzes the condensation of pantoate with beta-alanine in an ATP-dependent reaction via a pantoyl-adenylate intermediate. This Xanthomonas axonopodis pv. citri (strain 306) protein is Pantothenate synthetase.